The primary structure comprises 248 residues: PACRG-like protein (248 aa).

M1 is subject to N-acetylmethionine. The span at 1-29 shows a compositional bias: polar residues; that stretch reads MQKSEGSGGTQLKNRATGNYDQRTSSSTQ. The disordered stretch occupies residues 1–71; that stretch reads MQKSEGSGGT…LNPKTINPFG (71 aa). Positions 39 to 49 are enriched in low complexity; sequence SKSSLSTSSPE. Residue S47 is modified to Phosphoserine.

This chain is PACRG-like protein (PACRGL), found in Homo sapiens (Human).